We begin with the raw amino-acid sequence, 364 residues long: UDP-N-acetylenolpyruvoylglucosamine reductase (364 aa).

The FAD-binding PCMH-type domain occupies 30–196; the sequence is LGGPATRLIT…LRVRFELEDA (167 aa). Residue arginine 173 is part of the active site. Residue serine 252 is the Proton donor of the active site. Glutamate 356 is an active-site residue.

The protein belongs to the MurB family. It depends on FAD as a cofactor.

The protein localises to the cytoplasm. The catalysed reaction is UDP-N-acetyl-alpha-D-muramate + NADP(+) = UDP-N-acetyl-3-O-(1-carboxyvinyl)-alpha-D-glucosamine + NADPH + H(+). It functions in the pathway cell wall biogenesis; peptidoglycan biosynthesis. In terms of biological role, cell wall formation. The sequence is that of UDP-N-acetylenolpyruvoylglucosamine reductase from Streptomyces avermitilis (strain ATCC 31267 / DSM 46492 / JCM 5070 / NBRC 14893 / NCIMB 12804 / NRRL 8165 / MA-4680).